A 392-amino-acid chain; its full sequence is MGKTGIQLFDDSRNGFFSVSDLGFDSSLNSSNYHPIGGLFASVNQTNPFASLSSSDLSNRGNNSFSTQLNDLYTKYMPGKEEEEEVVNGEKRKRKKKGGLTLKIKIANPSLRRLLSGAVAGAVSRTVVAPLETIRTHLMVGSGGNSSTEVFSDIMKHEGWTGLFRGNLVNVIRVAPARAVELFVFETVNKKLSPPHGQESKIPIPASLLAGACAGVSQTLLTYPLELVKTRLTIQRGVYKGIFDAFLKIIREEGPTELYRGLAPSLIGVVPYAATNYFAYDSLRKAYRSFSKQEKIGNIETLLIGSLAGALSSTATFPLEVARKHMQVGAVSGRVVYKNMLHALVTILEHEGILGWYKGLGPSCLKLVPAAGISFMCYEACKKILIENNQEA.

Solcar repeat units follow at residues asparagine 108–lysine 191, isoleucine 202–alanine 286, and isoleucine 296–isoleucine 384. Helical transmembrane passes span arginine 113–threonine 133, leucine 168–valine 188, isoleucine 204–proline 224, alanine 263–leucine 283, leucine 302–alanine 322, and glycine 359–glutamate 379.

Belongs to the mitochondrial carrier (TC 2.A.29) family. Expressed in root tips, the central cylinder of young roots, and maturating and germinating pollen.

The protein resides in the plastid. It localises to the chloroplast inner membrane. Its subcellular location is the mitochondrion inner membrane. Inhibited by pyridoxal 5-phosphate but not mersalyl. Functionally, probable mitochondrial adenylate carrier that catalyzes the transport of ATP, ADP and AMP, but not ADP-glucose. Recombinant BT1 shows a unidirectional mode of transport in intact E.coli cells. May function as a plastidial nucleotide uniport carrier required to export newly synthesized adenylates into the cytosol. May be involved in abiotic stress response. The chain is Adenine nucleotide transporter BT1, chloroplastic/mitochondrial (BT1) from Arabidopsis thaliana (Mouse-ear cress).